A 388-amino-acid polypeptide reads, in one-letter code: Galactokinase (388 aa).

33 to 36 serves as a coordination point for substrate; sequence EHTD. ATP-binding positions include Ser67 and 124-130; that span reads GSGLSSS. Ser130 and Glu162 together coordinate Mg(2+). Asp174 serves as the catalytic Proton acceptor. Tyr224 contacts substrate.

Belongs to the GHMP kinase family. GalK subfamily.

Its subcellular location is the cytoplasm. The enzyme catalyses alpha-D-galactose + ATP = alpha-D-galactose 1-phosphate + ADP + H(+). The protein operates within carbohydrate metabolism; galactose metabolism. Its function is as follows. Catalyzes the transfer of the gamma-phosphate of ATP to D-galactose to form alpha-D-galactose-1-phosphate (Gal-1-P). The polypeptide is Galactokinase (Streptococcus thermophilus).